The chain runs to 1044 residues: Integrin alpha-8 (1044 aa).

Positions 1–23 are cleaved as a signal peptide; sequence MPRRQPPRPLLLLSALLCAPASA. Over 24–991 the chain is Extracellular; sequence FNLDEEKLTV…WSTPNVSFVI (968 aa). FG-GAP repeat units follow at residues 28–90, 104–165, 170–222, 236–288, 289–354, 355–413, and 417–480; these read EEKL…RCRQ, NGTR…AYAE, RNSN…ITNY, QTGV…SSDL, TFIQ…FLFR, DPQI…GLKT, and QVLN…LNPM. N66 carries an N-linked (GlcNAc...) asparagine glycan. Residues C81 and C88 are joined by a disulfide bond. A glycan (N-linked (GlcNAc...) asparagine) is linked at N104. C132 and C153 form a disulfide bridge. A glycan (N-linked (GlcNAc...) asparagine) is linked at N159. C169 and C182 are joined by a disulfide. N-linked (GlcNAc...) asparagine glycosylation occurs at N221. Ca(2+) is bound by residues E257, T259, D261, and E265. N-linked (GlcNAc...) asparagine glycans are attached at residues N284 and N293. Residues D311, N313, D315, L317, D319, D377, N379, D381, Y383, and D385 each coordinate Ca(2+). The short motif at 437–439 is the Cell attachment site element; the sequence is RGD. Residues D441, D443, N445, Y447, and D449 each coordinate Ca(2+). An N-linked (GlcNAc...) asparagine glycan is attached at N486. Intrachain disulfides connect C489-C500 and C506-C562. N587 is a glycosylation site (N-linked (GlcNAc...) asparagine). 2 disulfide bridges follow: C623–C629 and C695–C708. Residues N701, N719, N751, N762, N818, N877, and N904 are each glycosylated (N-linked (GlcNAc...) asparagine). Intrachain disulfides connect C849-C905 and C910-C915. N952 and N986 each carry an N-linked (GlcNAc...) asparagine glycan. A helical transmembrane segment spans residues 992-1015; sequence PLWVIILAIMLGLLVLAVLTLALW. At 1016–1044 the chain is on the cytoplasmic side; it reads KCGFFDRARPPQDDMADREQLTNNKTTDA.

This sequence belongs to the integrin alpha chain family. In terms of assembly, heterodimer of an alpha and a beta subunit. The alpha subunit is composed of a heavy and a light chain linked by a disulfide bond. Alpha-8 associates with beta-1. As to expression, prominently expressed on axons and on cells in contact with basal laminae in embryos.

It localises to the membrane. The protein localises to the cell membrane. Integrin alpha-8/beta-1 functions in the genesis of kidney and probably of other organs by regulating the recruitment of mesenchymal cells into epithelial structures. It recognizes the sequence R-G-D in a wide array of ligands including TNC, FN1, SPP1, TGFB1, TGFB3 and VTN. NPNT is probably its functional ligand in kidney genesis. Neuronal receptor for TNC it mediates cell-cell interactions and regulates neurite outgrowth of sensory and motor neurons. This Gallus gallus (Chicken) protein is Integrin alpha-8 (ITGA8).